A 1056-amino-acid chain; its full sequence is Kinesin-like protein KIF11 (1056 aa).

Residues 18–359 (NIQVVVRCRP…LEYAHRAKNI (342 aa)) enclose the Kinesin motor domain. 105–112 (GQTGTGKT) serves as a coordination point for ATP. Lysine 146 bears the N6-acetyllysine mark. Coiled coils occupy residues 364 to 480 (EVNQ…KEEY) and 736 to 763 (LEEK…DIVN). Threonine 458 bears the Phosphothreonine mark. Residue lysine 477 forms a Glycyl lysine isopeptide (Lys-Gly) (interchain with G-Cter in SUMO2) linkage. Position 925 is a phosphothreonine (threonine 925). Position 926 is a phosphothreonine; by CDK1 (threonine 926). Phosphoserine; by NEK6 is present on serine 1033. Lysine 1034 is covalently cross-linked (Glycyl lysine isopeptide (Lys-Gly) (interchain with G-Cter in ubiquitin)).

This sequence belongs to the TRAFAC class myosin-kinesin ATPase superfamily. Kinesin family. BimC subfamily. Interacts with the thyroid hormone receptor in the presence of thyroid hormone. Component of a large chromatin remodeling complex, at least composed of MYSM1, PCAF, RBM10 and KIF11/TRIP5. Interacts (via C-terminus) with the kinase NEK6 in both interphase and mitosis. Interacts with RARRES1 and AGBL2. Interacts with TPX2. In terms of processing, phosphorylated exclusively on serine during S phase, but on both serine and Thr-926 during mitosis, so controlling the association of KIF11 with the spindle apparatus (probably during early prophase). Post-translationally, a subset of this protein primarily localized at the spindle pole is phosphorylated by NEK6 during mitosis; phosphorylation is required for mitotic function. Ubiquitinated at Lys-1034 by UHRF1 via 'Lys-63'-linked ubiquitin chains, leading to interaction with spindle assembly factor TPX2, thereby ensuring accurate distribution to the spindles during metaphase.

The protein resides in the cytoplasm. It localises to the cytoskeleton. It is found in the spindle pole. In terms of biological role, motor protein required for establishing a bipolar spindle and thus contributing to chromosome congression during mitosis. Required in non-mitotic cells for transport of secretory proteins from the Golgi complex to the cell surface. This is Kinesin-like protein KIF11 (KIF11) from Homo sapiens (Human).